We begin with the raw amino-acid sequence, 124 residues long: MIKLKFGVFFTVLLSSAYAHGTPQNITDLCAEYHNTQIYTLNDKIFSYTESLAGKREMAIITFKNGAIFQVEVPGSQHIDSQKKAIERMKDTLRIAYLTEAKVEKLCVWNNKTPHAIAAISMAN.

An N-terminal signal peptide occupies residues 1-21 (MIKLKFGVFFTVLLSSAYAHG). Cysteine 30 and cysteine 107 are oxidised to a cystine.

In terms of assembly, the holotoxin (choleragen) consists of a pentameric ring of B subunits whose central pore is occupied by the A subunit. The A subunit contains two chains, A1 and A2, linked by a disulfide bridge.

It localises to the secreted. Its subcellular location is the host cell membrane. Functionally, the B subunit pentameric ring directs the A subunit to its target by binding to the GM1 gangliosides present on the surface of the intestinal epithelial cells. It can bind five GM1 gangliosides. It has no toxic activity by itself. The polypeptide is Cholera enterotoxin subunit B (ctxB) (Vibrio cholerae serotype O1 (strain ATCC 39315 / El Tor Inaba N16961)).